We begin with the raw amino-acid sequence, 126 residues long: Methylglyoxal synthase (126 aa).

One can recognise an MGS-like domain in the interval 1-126 (MADRKCLALI…AEQLIDFRRN (126 aa)). Substrate is bound by residues His12, Lys16, 38-41 (TGTT), and 59-60 (SG). Catalysis depends on Asp65, which acts as the Proton donor/acceptor. His92 serves as a coordination point for substrate.

The protein belongs to the methylglyoxal synthase family.

It catalyses the reaction dihydroxyacetone phosphate = methylglyoxal + phosphate. In terms of biological role, catalyzes the formation of methylglyoxal from dihydroxyacetone phosphate. The sequence is that of Methylglyoxal synthase from Rhizobium meliloti (strain 1021) (Ensifer meliloti).